A 363-amino-acid polypeptide reads, in one-letter code: NAD(P)H-quinone oxidoreductase subunit 1, chloroplastic (363 aa).

6 helical membrane-spanning segments follow: residues F30–L50, I104–L124, I129–G149, Y248–S268, V300–I320, and F343–L363.

This sequence belongs to the complex I subunit 1 family. NDH is composed of at least 16 different subunits, 5 of which are encoded in the nucleus.

The protein localises to the plastid. It is found in the chloroplast thylakoid membrane. The catalysed reaction is a plastoquinone + NADH + (n+1) H(+)(in) = a plastoquinol + NAD(+) + n H(+)(out). The enzyme catalyses a plastoquinone + NADPH + (n+1) H(+)(in) = a plastoquinol + NADP(+) + n H(+)(out). Its function is as follows. NDH shuttles electrons from NAD(P)H:plastoquinone, via FMN and iron-sulfur (Fe-S) centers, to quinones in the photosynthetic chain and possibly in a chloroplast respiratory chain. The immediate electron acceptor for the enzyme in this species is believed to be plastoquinone. Couples the redox reaction to proton translocation, and thus conserves the redox energy in a proton gradient. This Eucalyptus globulus subsp. globulus (Tasmanian blue gum) protein is NAD(P)H-quinone oxidoreductase subunit 1, chloroplastic.